A 224-amino-acid polypeptide reads, in one-letter code: 7-cyano-7-deazaguanine synthase (224 aa).

10–20 (LSGGLDSATVV) contacts ATP. 4 residues coordinate Zn(2+): Cys189, Cys199, Cys202, and Cys205.

The protein belongs to the QueC family. The cofactor is Zn(2+).

The catalysed reaction is 7-carboxy-7-deazaguanine + NH4(+) + ATP = 7-cyano-7-deazaguanine + ADP + phosphate + H2O + H(+). The protein operates within purine metabolism; 7-cyano-7-deazaguanine biosynthesis. In terms of biological role, catalyzes the ATP-dependent conversion of 7-carboxy-7-deazaguanine (CDG) to 7-cyano-7-deazaguanine (preQ(0)). The chain is 7-cyano-7-deazaguanine synthase from Pseudomonas fluorescens (strain SBW25).